The chain runs to 102 residues: Urease subunit beta (102 aa).

Belongs to the urease beta subunit family. Heterotrimer of UreA (gamma), UreB (beta) and UreC (alpha) subunits. Three heterotrimers associate to form the active enzyme.

The protein localises to the cytoplasm. The enzyme catalyses urea + 2 H2O + H(+) = hydrogencarbonate + 2 NH4(+). Its pathway is nitrogen metabolism; urea degradation; CO(2) and NH(3) from urea (urease route): step 1/1. The sequence is that of Urease subunit beta from Opitutus terrae (strain DSM 11246 / JCM 15787 / PB90-1).